The following is a 520-amino-acid chain: J protein JJJ2 (520 aa).

One can recognise a J domain in the interval 7-71 (TYYSVLGLPT…SSKQEYDAIL (65 aa)). Disordered stretches follow at residues 82–257 (LGYK…DLQN) and 389–409 (FESS…RGRP). The segment covering 91–100 (QNQSNNLNQQ) has biased composition (low complexity). The segment covering 152-182 (TSKNSKEQQGSQETTNTSENLQRNAKGNKNN) has biased composition (polar residues). Residues 397–409 (ENHRSDFNLRGRP) show a composition bias toward basic and acidic residues.

It localises to the cytoplasm. The protein resides in the nucleus. In Vanderwaltozyma polyspora (strain ATCC 22028 / DSM 70294 / BCRC 21397 / CBS 2163 / NBRC 10782 / NRRL Y-8283 / UCD 57-17) (Kluyveromyces polysporus), this protein is J protein JJJ2 (JJJ2).